Consider the following 351-residue polypeptide: Alanine racemase (351 aa).

Lys-35 functions as the Proton acceptor; specific for D-alanine in the catalytic mechanism. Position 35 is an N6-(pyridoxal phosphate)lysine (Lys-35). Substrate is bound at residue Arg-127. Tyr-247 (proton acceptor; specific for L-alanine) is an active-site residue. Met-295 lines the substrate pocket.

Belongs to the alanine racemase family. Pyridoxal 5'-phosphate is required as a cofactor.

It carries out the reaction L-alanine = D-alanine. It functions in the pathway amino-acid biosynthesis; D-alanine biosynthesis; D-alanine from L-alanine: step 1/1. Functionally, catalyzes the interconversion of L-alanine and D-alanine. May also act on other amino acids. In Vesicomyosocius okutanii subsp. Calyptogena okutanii (strain HA), this protein is Alanine racemase (alr).